The chain runs to 82 residues: Myosin light chain alkali (82 aa).

In terms of domain architecture, EF-hand spans 7-42; sequence GCYGDFIECLKLYDKEENGTMMLAELQHALLALGES.

Myosin is a hexamer of 2 heavy chains and 4 light chains.

This Drosophila sechellia (Fruit fly) protein is Myosin light chain alkali (Mlc1).